The following is a 216-amino-acid chain: Probable GTP-binding protein EngB (216 aa).

An EngB-type G domain is found at 21–192; sequence DAPQIALAGR…WRELRALAAG (172 aa). GTP-binding positions include 29-36, 56-60, 75-78, 142-145, and 170-173; these read GRSNVGKS, GKTRS, DLPG, TKGD, and VTAS. Residues Ser36 and Thr58 each coordinate Mg(2+). Residues 195–216 are disordered; the sequence is SADDEAEDAPSDTIDAIDDVTA. Over residues 196–216 the composition is skewed to acidic residues; the sequence is ADDEAEDAPSDTIDAIDDVTA.

This sequence belongs to the TRAFAC class TrmE-Era-EngA-EngB-Septin-like GTPase superfamily. EngB GTPase family. Requires Mg(2+) as cofactor.

In terms of biological role, necessary for normal cell division and for the maintenance of normal septation. The chain is Probable GTP-binding protein EngB from Nitratidesulfovibrio vulgaris (strain DP4) (Desulfovibrio vulgaris).